Reading from the N-terminus, the 152-residue chain is Gamma-glutamylaminecyclotransferase C (152 aa).

Substrate is bound at residue 9 to 12 (YGSL). Glu84 functions as the Proton acceptor in the catalytic mechanism.

The protein belongs to the gamma-glutamylcyclotransferase family.

It carries out the reaction epsilon-(gamma-L-glutamyl)-L-lysine = 5-oxo-L-proline + L-lysine. May contribute to degradation of proteins cross-linked by transglutaminases by degrading the cross-link between a lysine and a glutamic acid residue. Catalyzes the formation of 5-oxo-L-proline from L-gamma-glutamyl-L-epsilon-lysine. This is Gamma-glutamylaminecyclotransferase C (ggact.3) from Danio rerio (Zebrafish).